The following is a 145-amino-acid chain: Transmembrane protein 216 (145 aa).

The next 4 membrane-spanning stretches (helical) occupy residues 22–42 (ILFFLNGWYNATYFLLELFIF), 56–76 (LVLDVVMLLLYLGIEVIRLFF), 89–109 (LSISVALTFPSAMMASYYLLL), and 122–142 (GILLFFCGSELLLEVLTLAAF).

Part of the tectonic-like complex (also named B9 complex). Interacts with TMEM107.

The protein resides in the membrane. Its subcellular location is the cytoplasm. It localises to the cytoskeleton. It is found in the cilium basal body. In terms of biological role, part of the tectonic-like complex which is required for tissue-specific ciliogenesis and may regulate ciliary membrane composition. This chain is Transmembrane protein 216 (TMEM216), found in Homo sapiens (Human).